Consider the following 1786-residue polypeptide: Laminin subunit beta-1 (1786 aa).

A signal peptide spans 1–21 (MGLLQVFAFGVLALWGTRVCA). In terms of domain architecture, Laminin N-terminal spans 31–270 (AEGSCYPATG…AVYDMVVRGN (240 aa)). N-linked (GlcNAc...) asparagine glycosylation occurs at Asn-120. At Ser-250 the chain carries Phosphoserine. Intrachain disulfides connect Cys-271-Cys-280, Cys-273-Cys-298, Cys-300-Cys-309, Cys-312-Cys-332, Cys-335-Cys-344, Cys-337-Cys-362, Cys-365-Cys-374, Cys-377-Cys-395, Cys-398-Cys-411, Cys-400-Cys-426, Cys-428-Cys-437, Cys-440-Cys-455, Cys-458-Cys-472, Cys-460-Cys-479, Cys-481-Cys-490, Cys-493-Cys-507, Cys-510-Cys-522, Cys-512-Cys-529, and Cys-531-Cys-540. 4 Laminin EGF-like domains span residues 271–334 (CFCY…ACKK), 335–397 (CNCN…LCEP), 398–457 (CTCD…GCKS), and 458–509 (CACN…GCRP). Asn-356 is a glycosylation site (N-linked (GlcNAc...) asparagine). The Laminin EGF-like 5; truncated domain occupies 510–540 (CDCDLGGALNNSCSEDSGQCSCLPHMIGRQC). N-linked (GlcNAc...) asparagine glycosylation is present at Asn-519. The Laminin IV type B domain occupies 549-767 (FTTLDHYIYE…IIFSISALIH (219 aa)). Asn-677 carries N-linked (GlcNAc...) asparagine glycosylation. Disulfide bonds link Cys-773–Cys-785, Cys-775–Cys-792, Cys-794–Cys-803, Cys-806–Cys-818, Cys-821–Cys-833, Cys-823–Cys-840, Cys-842–Cys-851, Cys-854–Cys-864, Cys-867–Cys-876, Cys-869–Cys-883, Cys-886–Cys-895, Cys-898–Cys-914, Cys-917–Cys-933, Cys-919–Cys-944, Cys-946–Cys-955, Cys-958–Cys-973, Cys-976–Cys-990, Cys-978–Cys-997, Cys-1000–Cys-1009, Cys-1012–Cys-1025, Cys-1028–Cys-1040, Cys-1030–Cys-1054, Cys-1056–Cys-1065, Cys-1068–Cys-1081, Cys-1084–Cys-1096, Cys-1086–Cys-1103, Cys-1105–Cys-1114, Cys-1117–Cys-1129, Cys-1132–Cys-1144, Cys-1134–Cys-1151, Cys-1153–Cys-1162, and Cys-1165–Cys-1176. 8 consecutive Laminin EGF-like domains span residues 773-820 (CECD…GCKP), 821-866 (CDCH…SCQP), 867-916 (CQCN…HCRP), 917-975 (CPCP…SCQP), 976-1027 (CQCH…DCRK), 1028-1083 (CVCN…GCGP), 1084-1131 (CNCN…ECRA), and 1132-1178 (CDCD…DCTP). Asn-1041 carries N-linked (GlcNAc...) asparagine glycosylation. The tract at residues 1179 to 1397 (CHQCFALWDA…LDLSAVAQMT (219 aa)) is domain II. Asn-1195, Asn-1279, Asn-1336, and Asn-1343 each carry an N-linked (GlcNAc...) asparagine glycan. The stretch at 1216 to 1315 (YRETVDSVEK…LEFIKNSDIQ (100 aa)) forms a coiled coil. Residues 1368-1388 (KEQQEEQARLLDELAGKLQSL) adopt a coiled-coil conformation. Residues 1398-1430 (CGTPPGADCSESECGGPNCRTDEGEKKCGGPGC) form a domain alpha region. Residues 1431 to 1786 (GGLVTVAHSA…EKVAVYSTCL (356 aa)) are domain I. The stretch at 1448 to 1778 (DRDVLSALAE…RSLLKDISEK (331 aa)) forms a coiled coil. Asn-1487 carries N-linked (GlcNAc...) asparagine glycosylation. Position 1496 is a phosphoserine (Ser-1496). Asn-1542 and Asn-1643 each carry an N-linked (GlcNAc...) asparagine glycan. Ser-1666 bears the Phosphoserine mark.

As to quaternary structure, laminin is a complex glycoprotein, consisting of three different polypeptide chains (alpha, beta, gamma), which are bound to each other by disulfide bonds into a cross-shaped molecule comprising one long and three short arms with globules at each end. Beta-1 is a subunit of laminin-1 (laminin-111 or EHS laminin), laminin-2 (laminin-211 or merosin), laminin-6 (laminin-311 or K-laminin), laminin-8 (laminin-411), laminin-10 (laminin-511) and laminin-12 (laminin-213). Interacts with ITGB1. In terms of tissue distribution, widely expressed in the embryo. High levels are detected in the cerebellar basement membrane, at postnatal day 7.

The protein resides in the secreted. The protein localises to the extracellular space. It localises to the extracellular matrix. It is found in the basement membrane. Functionally, binding to cells via a high affinity receptor, laminin is thought to mediate the attachment, migration and organization of cells into tissues during embryonic development by interacting with other extracellular matrix components. Involved in the organization of the laminar architecture of the cerebral cortex. It is probably required for the integrity of the basement membrane/glia limitans that serves as an anchor point for the endfeet of radial glial cells and as a physical barrier to migrating neurons. Radial glial cells play a central role in cerebral cortical development, where they act both as the proliferative unit of the cerebral cortex and a scaffold for neurons migrating toward the pial surface. The sequence is that of Laminin subunit beta-1 (Lamb1) from Mus musculus (Mouse).